A 181-amino-acid chain; its full sequence is Adenylate kinase (181 aa).

Position 10–15 (10–15 (GAGKGT)) interacts with ATP. Residues 30–59 (STGDLFRSNISEGTELGLQAKQYLDAGDLV) are NMP. AMP-binding positions include T31, R36, 57–59 (DLV), 85–88 (GFPR), and Q92. The LID stretch occupies residues 126–132 (GRGRADD). R127 is an ATP binding site. Positions 129 and 140 each coordinate AMP. G166 provides a ligand contact to ATP.

This sequence belongs to the adenylate kinase family. Monomer.

The protein resides in the cytoplasm. It carries out the reaction AMP + ATP = 2 ADP. It functions in the pathway purine metabolism; AMP biosynthesis via salvage pathway; AMP from ADP: step 1/1. Its function is as follows. Catalyzes the reversible transfer of the terminal phosphate group between ATP and AMP. Plays an important role in cellular energy homeostasis and in adenine nucleotide metabolism. The polypeptide is Adenylate kinase (Mycobacteroides abscessus (strain ATCC 19977 / DSM 44196 / CCUG 20993 / CIP 104536 / JCM 13569 / NCTC 13031 / TMC 1543 / L948) (Mycobacterium abscessus)).